The following is a 443-amino-acid chain: MSGEQVDILVVDDDISHCTILQALLRGWGYRVALANNGLQALEKVREKVFDLVLCDIRMAEMDGIETLKEIKTFNPSIPVLIMTAYSSVDTAVEALKSGALDYLIKPLDFDKLQLTLSEALAHTRLSESPVTETPAAQFGMVGDSPAMRALLNNITLVAPSDATVLIHGESGTGKELVARALHASSARSRRPLVILNCAALNESLLESELFGHEKGAFTGADKRREGRFVEADGGTLFLDEIGDISPLMQVRLLRAIQEREVQRVGSNQTLSVDVRLIAATHRDLAEEVSAGRFRQDLYYRLNVVTIDMPPLRHRREDIPPLARYFLQRYAERNRKAVQGFTPQAMDLLIHYAWPGNIRELENAVERAVVLLTGEYISERELPLAITGTPVADAPHGDDSIQPLVEVEKEAILAALERTGGNKTEAARRLGITRKTLLAKLSR.

The Response regulatory domain maps to 7-121 (DILVVDDDIS…KLQLTLSEAL (115 aa)). D56 is modified (4-aspartylphosphate). A Sigma-54 factor interaction domain is found at 141–370 (MVGDSPAMRA…LENAVERAVV (230 aa)). ATP is bound by residues G172, T173, R329, and R359. A DNA-binding region (H-T-H motif) is located at residues 423-442 (KTEAARRLGITRKTLLAKLS).

In terms of processing, phosphorylated by ZraS.

Its subcellular location is the cytoplasm. Activity of the ZraS/ZraR two-component system is repressed by the zinc-bound form of ZraP, which probably interacts with the periplasmic region of ZraS. Its function is as follows. Part of the Zra signaling pathway, an envelope stress response (ESR) system composed of the periplasmic accessory protein ZraP, the histidine kinase ZraS and the transcriptional regulator ZraR. The ZraPSR system contributes to antibiotic resistance and is important for membrane integrity in the presence of membrane-targeting biocides. ZraR is a member of the two-component regulatory system ZraS/ZraR. When activated by ZraS, acts in conjunction with sigma-54 to regulate the expression of zraP in the presence of high Zn(2+) or Pb(2+) concentrations. Also positively autoregulates the expression of the zraSR operon. The protein is Transcriptional regulatory protein ZraR (zraR) of Klebsiella oxytoca.